We begin with the raw amino-acid sequence, 1110 residues long: Guanylate cyclase 2D (1110 aa).

The N-terminal stretch at 1–66 (MAGLQQGCHP…ADSLSLPAWA (66 aa)) is a signal peptide. The Extracellular segment spans residues 67 to 475 (RETFTLGVLG…PNTLCIRGVQ (409 aa)). The cysteines at positions 121 and 149 are disulfide-linked. 2 N-linked (GlcNAc...) asparagine glycosylation sites follow: Asn-304 and Asn-374. A helical transmembrane segment spans residues 476-500 (PLGSLLTLTITCVLALVGGFLAYFI). The Cytoplasmic portion of the chain corresponds to 501–1110 (RLGLQQLRLL…TGFAKLARVG (610 aa)). A disordered region spans residues 529–556 (TPSRRRPHVDSGSESRSVVDGGSPQSVI). The Protein kinase domain maps to 541 to 818 (SESRSVVDGG…PSLDQIYTQF (278 aa)). Residues 880–921 (MGTTVEPEYFDQVTIYFSDIVGFTTISALSEPIEVVGFLNDL) are interaction with NCALD. The 131-residue stretch at 893-1023 (TIYFSDIVGF…DTVNTASRME (131 aa)) folds into the Guanylate cyclase domain.

This sequence belongs to the adenylyl cyclase class-4/guanylyl cyclase family. In terms of assembly, interacts (via the catalytic domain) with NCALD. As to expression, specifically expressed in a subpopulation of olfactory sensory neurons. Expressed in the cilia of the olfactory epithelium.

The protein localises to the cell projection. The protein resides in the cilium membrane. It catalyses the reaction GTP = 3',5'-cyclic GMP + diphosphate. Its activity is regulated as follows. Activated by Ca(2+). Activated by NCALD in a Ca(2+)-dependent fashion. Its function is as follows. Functions as an olfactory receptor activated by a urine odorant, uroguanylin. Activated as well by the volatile semiochemicals carbon disulfide (CS2) and carbon dioxide (CO2). Has guanylate cyclase activity upon binding of the ligand. Activation of GUCY2D neurons leads to the cGMP-dependent activation of the CNGA3 channels, membrane depolarization and an increase in action potential frequency. Signaling pathways activated by GUCY2D may trigger social behaviors such as acquisition of food preference. The sequence is that of Guanylate cyclase 2D (Gucy2d) from Rattus norvegicus (Rat).